The chain runs to 290 residues: Ribosomal RNA small subunit methyltransferase A (290 aa).

S-adenosyl-L-methionine contacts are provided by N27, L29, G54, E75, D100, and N125.

It belongs to the class I-like SAM-binding methyltransferase superfamily. rRNA adenine N(6)-methyltransferase family. RsmA subfamily.

Its subcellular location is the cytoplasm. The catalysed reaction is adenosine(1518)/adenosine(1519) in 16S rRNA + 4 S-adenosyl-L-methionine = N(6)-dimethyladenosine(1518)/N(6)-dimethyladenosine(1519) in 16S rRNA + 4 S-adenosyl-L-homocysteine + 4 H(+). Its function is as follows. Specifically dimethylates two adjacent adenosines (A1518 and A1519) in the loop of a conserved hairpin near the 3'-end of 16S rRNA in the 30S particle. May play a critical role in biogenesis of 30S subunits. This chain is Ribosomal RNA small subunit methyltransferase A, found in Streptococcus pneumoniae (strain 70585).